We begin with the raw amino-acid sequence, 362 residues long: Probable secreted beta-glucosidase UTH1 (362 aa).

Residues 1 to 17 form the signal peptide; sequence MKLSALLALSASTAVLA.

It belongs to the SUN family.

It localises to the mitochondrion outer membrane. It is found in the secreted. The protein localises to the cell wall. Its function is as follows. Involved in aging, oxidative stress response, and in the regulation of mitochondrial biogenesis. Inactivation of UTH1 increases life span, leads to higher resistance to heat stress and to hydrogen peroxide, and increases sensitivity to the superoxide radical-generating drug paraquat and to copper. Also required for the selective autophagic degradation of mitochondria (mitophagy) in response to nitrogen starvation. Involved in the remodeling of the cell wall during the various phases of yeast culture development and under various environmental conditions and plays a role in septation. Involved in cell sensitivity to boric acid. This Saccharomyces cerevisiae (strain RM11-1a) (Baker's yeast) protein is Probable secreted beta-glucosidase UTH1 (UTH1).